The primary structure comprises 380 residues: Cytochrome b (380 aa).

Helical transmembrane passes span 34–54, 78–99, 114–134, and 179–199; these read FGSLLGICLMTQILTGLLLAM, WLIRNLHANGASFFFICIYLHI, WNTGIILLLTLMATAFVGYVL, and FFALHFLLPFAIAGLTLIHLT. The heme b site is built by H84 and H98. Heme b is bound by residues H183 and H197. H202 serves as a coordination point for a ubiquinone. 4 helical membrane passes run 227 to 247, 289 to 309, 321 to 341, and 348 to 368; these read LKDILGFTLMFLPLTSLALFS, LGGVLALAASVLILFLSPFLH, LSQLLFWILVTNLFILTWVGS, and FIIIGQLASITYFTILLILFP.

The protein belongs to the cytochrome b family. In terms of assembly, the cytochrome bc1 complex contains 11 subunits: 3 respiratory subunits (MT-CYB, CYC1 and UQCRFS1), 2 core proteins (UQCRC1 and UQCRC2) and 6 low-molecular weight proteins (UQCRH/QCR6, UQCRB/QCR7, UQCRQ/QCR8, UQCR10/QCR9, UQCR11/QCR10 and a cleavage product of UQCRFS1). This cytochrome bc1 complex then forms a dimer. Heme b is required as a cofactor.

It localises to the mitochondrion inner membrane. Functionally, component of the ubiquinol-cytochrome c reductase complex (complex III or cytochrome b-c1 complex) that is part of the mitochondrial respiratory chain. The b-c1 complex mediates electron transfer from ubiquinol to cytochrome c. Contributes to the generation of a proton gradient across the mitochondrial membrane that is then used for ATP synthesis. This chain is Cytochrome b (MT-CYB), found in Daption capense (Cape petrel).